The primary structure comprises 1091 residues: Exonuclease/helicase subunit RexB (1091 aa).

Belongs to the helicase family. AddB/RexB type 2 subfamily. As to quaternary structure, heterodimer of RexA (AddA) and RexB. Mg(2+) serves as cofactor.

Its function is as follows. Involved in DNA double-strand break repair. Is not involved in recombination during natural competence or in plasmid establishment. Functionally, the heterodimer acts as both an ATP-dependent DNA helicase and an ATP-dependent, dual-direction single-stranded exonuclease. Recognizes the chi site generating a DNA molecule suitable for the initiation of homologous recombination. This subunit has 5' -&gt; 3' nuclease activity but not helicase activity. This Streptococcus pneumoniae serotype 4 (strain ATCC BAA-334 / TIGR4) protein is Exonuclease/helicase subunit RexB.